The sequence spans 98 residues: NADH-ubiquinone oxidoreductase chain 4L (98 aa).

The next 3 membrane-spanning stretches (helical) occupy residues 2-22 (PSIF…TLVF), 29-49 (SLLC…LIIL), and 61-81 (ILLL…LVMV).

The protein belongs to the complex I subunit 4L family. Core subunit of respiratory chain NADH dehydrogenase (Complex I) which is composed of 45 different subunits.

The protein localises to the mitochondrion inner membrane. The enzyme catalyses a ubiquinone + NADH + 5 H(+)(in) = a ubiquinol + NAD(+) + 4 H(+)(out). Functionally, core subunit of the mitochondrial membrane respiratory chain NADH dehydrogenase (Complex I) which catalyzes electron transfer from NADH through the respiratory chain, using ubiquinone as an electron acceptor. Part of the enzyme membrane arm which is embedded in the lipid bilayer and involved in proton translocation. This is NADH-ubiquinone oxidoreductase chain 4L (MT-ND4L) from Propithecus tattersalli (Golden-crowned Sifaka).